Here is a 403-residue protein sequence, read N- to C-terminus: Metacaspase-1 (403 aa).

The disordered stretch occupies residues 1 to 95; it reads MFPGSGHNTY…PSGSQSFGQN (95 aa). The span at 13-22 shows a compositional bias: pro residues; it reads YPPPQGPPPN. Composition is skewed to low complexity over residues 23–34 and 49–62; these read NNGYNSGPNNSY and QYDQ…QSQP. Catalysis depends on residues histidine 193 and cysteine 249.

It belongs to the peptidase C14B family.

Functionally, involved in cell death (apoptosis). The polypeptide is Metacaspase-1 (MCA1) (Scheffersomyces stipitis (strain ATCC 58785 / CBS 6054 / NBRC 10063 / NRRL Y-11545) (Yeast)).